Here is a 1605-residue protein sequence, read N- to C-terminus: Pentafunctional AROM polypeptide (1605 aa).

The segment at Met-1–Asn-384 is 3-dehydroquinate synthase. NAD(+) contacts are provided by residues Asp-44–Asn-46, Glu-81–Lys-84, Gly-114–Val-116, and Asp-119. Arg-130 lines the 7-phospho-2-dehydro-3-deoxy-D-arabino-heptonate pocket. Thr-139 to Thr-140 is a binding site for NAD(+). Residues Asp-146 and Lys-152 each coordinate 7-phospho-2-dehydro-3-deoxy-D-arabino-heptonate. Lys-161 lines the NAD(+) pocket. Residue Asn-162 coordinates 7-phospho-2-dehydro-3-deoxy-D-arabino-heptonate. NAD(+) is bound by residues Phe-179 to Thr-182 and Asn-190. Glu-194 is a Zn(2+) binding site. 7-phospho-2-dehydro-3-deoxy-D-arabino-heptonate contacts are provided by residues Glu-194 to Lys-197 and Lys-250. Glu-260 (proton acceptor; for 3-dehydroquinate synthase activity) is an active-site residue. 7-phospho-2-dehydro-3-deoxy-D-arabino-heptonate is bound by residues Arg-264–Asn-268 and His-271. His-271 contacts Zn(2+). His-275 serves as the catalytic Proton acceptor; for 3-dehydroquinate synthase activity. Residues His-287 and Lys-356 each contribute to the 7-phospho-2-dehydro-3-deoxy-D-arabino-heptonate site. Zn(2+) is bound at residue His-287. The segment at Val-397–Val-842 is EPSP synthase. Cys-824 acts as the For EPSP synthase activity in catalysis. The segment at Ser-864–Ser-1055 is shikimate kinase. Gly-871–Thr-878 is an ATP binding site. Residues Leu-1056–Asp-1276 form a 3-dehydroquinase region. Catalysis depends on His-1179, which acts as the Proton acceptor; for 3-dehydroquinate dehydratase activity. Residue Lys-1207 is the Schiff-base intermediate with substrate; for 3-dehydroquinate dehydratase activity of the active site. A shikimate dehydrogenase region spans residues Lys-1289–Ser-1605.

In the N-terminal section; belongs to the sugar phosphate cyclases superfamily. Dehydroquinate synthase family. It in the 2nd section; belongs to the EPSP synthase family. The protein in the 3rd section; belongs to the shikimate kinase family. This sequence in the 4th section; belongs to the type-I 3-dehydroquinase family. In the C-terminal section; belongs to the shikimate dehydrogenase family. Homodimer. Zn(2+) is required as a cofactor.

It is found in the cytoplasm. It catalyses the reaction 7-phospho-2-dehydro-3-deoxy-D-arabino-heptonate = 3-dehydroquinate + phosphate. The enzyme catalyses 3-dehydroquinate = 3-dehydroshikimate + H2O. It carries out the reaction shikimate + NADP(+) = 3-dehydroshikimate + NADPH + H(+). The catalysed reaction is shikimate + ATP = 3-phosphoshikimate + ADP + H(+). It catalyses the reaction 3-phosphoshikimate + phosphoenolpyruvate = 5-O-(1-carboxyvinyl)-3-phosphoshikimate + phosphate. The protein operates within metabolic intermediate biosynthesis; chorismate biosynthesis; chorismate from D-erythrose 4-phosphate and phosphoenolpyruvate: step 2/7. Its pathway is metabolic intermediate biosynthesis; chorismate biosynthesis; chorismate from D-erythrose 4-phosphate and phosphoenolpyruvate: step 3/7. It participates in metabolic intermediate biosynthesis; chorismate biosynthesis; chorismate from D-erythrose 4-phosphate and phosphoenolpyruvate: step 4/7. It functions in the pathway metabolic intermediate biosynthesis; chorismate biosynthesis; chorismate from D-erythrose 4-phosphate and phosphoenolpyruvate: step 5/7. The protein operates within metabolic intermediate biosynthesis; chorismate biosynthesis; chorismate from D-erythrose 4-phosphate and phosphoenolpyruvate: step 6/7. In terms of biological role, the AROM polypeptide catalyzes 5 consecutive enzymatic reactions in prechorismate polyaromatic amino acid biosynthesis. The polypeptide is Pentafunctional AROM polypeptide (Aspergillus fumigatus (strain CBS 144.89 / FGSC A1163 / CEA10) (Neosartorya fumigata)).